Consider the following 231-residue polypeptide: Cytidylate kinase (231 aa).

An ATP-binding site is contributed by 16–24; it reads GPAASGKST. The interval 176–205 is disordered; sequence PDLDSLEQEITKRDRDDAEREHAPLKKHPE. Basic and acidic residues predominate over residues 184-205; the sequence is EITKRDRDDAEREHAPLKKHPE.

Belongs to the cytidylate kinase family. Type 1 subfamily.

It localises to the cytoplasm. It catalyses the reaction CMP + ATP = CDP + ADP. The catalysed reaction is dCMP + ATP = dCDP + ADP. The sequence is that of Cytidylate kinase from Pelodictyon phaeoclathratiforme (strain DSM 5477 / BU-1).